The sequence spans 611 residues: Mitochondrial distribution and morphology protein 34 (611 aa).

The region spanning 1 to 195 is the SMP-LTD domain; the sequence is MAFNFNWSPL…LPAIIHRLSL (195 aa). Positions 325–342 are enriched in polar residues; the sequence is SAPLSSQDTASVASSQSR. 4 disordered regions span residues 325–347, 361–402, 415–544, and 587–611; these read SAPL…GLPS, RHSK…STIT, SIIP…PTYT, and SYVG…AYRH. Over residues 361-373 the composition is skewed to basic residues; that stretch reads RHSKAHARKRKKR. Composition is skewed to basic and acidic residues over residues 374 to 385 and 444 to 459; these read VIDLRPHRKPTD and TLRD…ERTN. Pro residues predominate over residues 520–529; it reads PLGPPAPAPI.

The protein belongs to the MDM34 family. As to quaternary structure, component of the ER-mitochondria encounter structure (ERMES) or MDM complex, composed of MMM1, MDM10, MDM12 and MDM34.

The protein localises to the mitochondrion outer membrane. Functionally, component of the ERMES/MDM complex, which serves as a molecular tether to connect the endoplasmic reticulum (ER) and mitochondria. Components of this complex are involved in the control of mitochondrial shape and protein biogenesis, and function in nonvesicular lipid trafficking between the ER and mitochondria. MDM34 is required for the interaction of the ER-resident membrane protein MMM1 and the outer mitochondrial membrane-resident beta-barrel protein MDM10. The chain is Mitochondrial distribution and morphology protein 34 from Paracoccidioides brasiliensis (strain Pb18).